We begin with the raw amino-acid sequence, 159 residues long: MTRKGRRLVLIGAGLGVLALAAGLILSALNDTIVFFRSPTEVAQQQVAPGARLRLGGLVETGSVVKSGTLTTFKVTDGNATVKVAYSGILPDLFREGQGVVAEGALQPDGSFKADSVLAKHDEKYMPREVADALKKQGRWQEGGPAPGTAAPVQRAPGS.

At 1-7 the chain is on the cytoplasmic side; sequence MTRKGRR. The helical; Signal-anchor for type II membrane protein transmembrane segment at 8 to 28 threads the bilayer; that stretch reads LVLIGAGLGVLALAAGLILSA. Residues 29-159 lie on the Periplasmic side of the membrane; that stretch reads LNDTIVFFRS…AAPVQRAPGS (131 aa). H121 and Y125 together coordinate heme. The disordered stretch occupies residues 134–159; that stretch reads LKKQGRWQEGGPAPGTAAPVQRAPGS.

This sequence belongs to the CcmE/CycJ family.

It localises to the cell inner membrane. In terms of biological role, heme chaperone required for the biogenesis of c-type cytochromes. Transiently binds heme delivered by CcmC and transfers the heme to apo-cytochromes in a process facilitated by CcmF and CcmH. The chain is Cytochrome c-type biogenesis protein CcmE from Xanthobacter autotrophicus (strain ATCC BAA-1158 / Py2).